The sequence spans 460 residues: MVWNTNLRWRLPVTCLLLQVALVVLFGVFVRYDMDADPHWIDKKEAENSTSDMENEFYYRYPSFQDVHVMIFVGFGFLMTFLQRYGYSSVGFNFLLAAFGIQWALLLQGWFHSYYRGYIRVGVENLINADFCVGSVCVAFGAVLGKVSPVQLLIMTLFQVTLFSVNEFILLNLLEVKDAGGSMTIHTFGAYFGLTVTWILYRPGLHQSKERQSSVYHSDLFAMIGTLFLWMYWPSFNSAVSNHGDAQHRAAINTYCSLAACVLTSVALSSALHKKGKLDMVHIQNATLAGGVAVGTAAEMMLMPYGSLIVGFICGIVSTLGFVYLTPFLESRLRVQDTCGIHNLHGIPGIIGAIVGAVTASCANTDVYGVNGLTQAFGFDGFKTNRTPSMQGKFQAAGLFVSLAMALVGGIIVGIILKLPFWGQPADENCFEDAIYWEMPEEPKSTVLHPEDSTLKPSEP.

At 1 to 9 the chain is on the cytoplasmic side; the sequence is MVWNTNLRW. The helical transmembrane segment at 10-30 threads the bilayer; sequence RLPVTCLLLQVALVVLFGVFV. The Extracellular portion of the chain corresponds to 31 to 61; the sequence is RYDMDADPHWIDKKEAENSTSDMENEFYYRY. Asn48 carries N-linked (GlcNAc...) asparagine glycosylation. A helical membrane pass occupies residues 62-82; the sequence is PSFQDVHVMIFVGFGFLMTFL. Over 83 to 90 the chain is Cytoplasmic; that stretch reads QRYGYSSV. The chain crosses the membrane as a helical span at residues 91–111; it reads GFNFLLAAFGIQWALLLQGWF. Over 112–125 the chain is Extracellular; sequence HSYYRGYIRVGVEN. The chain crosses the membrane as a helical span at residues 126-145; the sequence is LINADFCVGSVCVAFGAVLG. Residues 146-151 are Cytoplasmic-facing; sequence KVSPVQ. The helical transmembrane segment at 152–174 threads the bilayer; that stretch reads LLIMTLFQVTLFSVNEFILLNLL. Over 175 to 179 the chain is Extracellular; it reads EVKDA. Residues 180-200 traverse the membrane as a helical segment; that stretch reads GGSMTIHTFGAYFGLTVTWIL. Topologically, residues 201–219 are cytoplasmic; the sequence is YRPGLHQSKERQSSVYHSD. Residues 220–240 traverse the membrane as a helical segment; it reads LFAMIGTLFLWMYWPSFNSAV. At 241-251 the chain is on the extracellular side; sequence SNHGDAQHRAA. The helical transmembrane segment at 252-272 threads the bilayer; the sequence is INTYCSLAACVLTSVALSSAL. Residues 273 to 285 lie on the Cytoplasmic side of the membrane; the sequence is HKKGKLDMVHIQN. Residues 286 to 306 form a helical membrane-spanning segment; it reads ATLAGGVAVGTAAEMMLMPYG. Position 307 (Ser307) is a topological domain, extracellular. A helical membrane pass occupies residues 308 to 328; that stretch reads LIVGFICGIVSTLGFVYLTPF. At 329–339 the chain is on the cytoplasmic side; it reads LESRLRVQDTC. Residues 340–360 form a helical membrane-spanning segment; sequence GIHNLHGIPGIIGAIVGAVTA. Residues 361-396 are Extracellular-facing; it reads SCANTDVYGVNGLTQAFGFDGFKTNRTPSMQGKFQA. Residues 397-417 traverse the membrane as a helical segment; that stretch reads AGLFVSLAMALVGGIIVGIIL. Residues 418-460 are Cytoplasmic-facing; that stretch reads KLPFWGQPADENCFEDAIYWEMPEEPKSTVLHPEDSTLKPSEP.

The protein belongs to the ammonium transporter (TC 2.A.49) family. Rh subfamily. As to quaternary structure, homotrimer. Post-translationally, N-glycosylated.

The protein resides in the apical cell membrane. The enzyme catalyses NH4(+)(in) = NH4(+)(out). It carries out the reaction methylamine(out) = methylamine(in). The catalysed reaction is CO2(out) = CO2(in). In terms of biological role, ammonium transporter involved in the maintenance of acid-base homeostasis. Transports ammonium and its related derivative methylammonium across the plasma membrane of epithelial cells likely contributing to renal transepithelial ammonia transport and ammonia metabolism. Postulated to primarily mediate an electroneutral bidirectional transport of NH3 ammonia species according to a mechanism that implies interaction of an NH4(+) ion with acidic residues of the pore entry followed by dissociation of NH4(+) into NH3 and H(+). As a result NH3 transits through the central pore and is protonated on the extracellular side reforming NH4(+). May act as a CO2 channel providing for renal acid secretion. This is Ammonium transporter Rh type C (RHCG) from Canis lupus familiaris (Dog).